A 251-amino-acid polypeptide reads, in one-letter code: Pyrroloquinoline-quinone synthase (251 aa).

This sequence belongs to the PqqC family.

The enzyme catalyses 6-(2-amino-2-carboxyethyl)-7,8-dioxo-1,2,3,4,7,8-hexahydroquinoline-2,4-dicarboxylate + 3 O2 = pyrroloquinoline quinone + 2 H2O2 + 2 H2O + H(+). The protein operates within cofactor biosynthesis; pyrroloquinoline quinone biosynthesis. Functionally, ring cyclization and eight-electron oxidation of 3a-(2-amino-2-carboxyethyl)-4,5-dioxo-4,5,6,7,8,9-hexahydroquinoline-7,9-dicarboxylic-acid to PQQ. The polypeptide is Pyrroloquinoline-quinone synthase (Pseudomonas putida (strain ATCC 700007 / DSM 6899 / JCM 31910 / BCRC 17059 / LMG 24140 / F1)).